The primary structure comprises 316 residues: Heme oxygenase 2 (316 aa).

Over residues 1–12 the composition is skewed to acidic residues; sequence MSAEVETSEGVD. Positions 1–29 are disordered; that stretch reads MSAEVETSEGVDESEKKNSGALEKENQMR. S2 carries the N-acetylserine modification. S2 carries the post-translational modification Phosphoserine. Over residues 13–27 the composition is skewed to basic and acidic residues; it reads ESEKKNSGALEKENQ. A heme b-binding site is contributed by H45. 2 HRM repeats span residues 264-269 and 281-286; these read KCPFYA and SCPFRT. C265 and C282 each carry S-nitrosocysteine.

The protein belongs to the heme oxygenase family. In terms of processing, S-nitrosylated by BLVRB.

The protein resides in the microsome. The protein localises to the endoplasmic reticulum. The enzyme catalyses heme b + 3 reduced [NADPH--hemoprotein reductase] + 3 O2 = biliverdin IXalpha + CO + Fe(2+) + 3 oxidized [NADPH--hemoprotein reductase] + 3 H2O + H(+). In terms of biological role, heme oxygenase cleaves the heme ring at the alpha methene bridge to form biliverdin. Biliverdin is subsequently converted to bilirubin by biliverdin reductase. Under physiological conditions, the activity of heme oxygenase is highest in the spleen, where senescent erythrocytes are sequestrated and destroyed. Heme oxygenase 2 could be implicated in the production of carbon monoxide in brain where it could act as a neurotransmitter. This Macaca fascicularis (Crab-eating macaque) protein is Heme oxygenase 2 (HMOX2).